A 444-amino-acid chain; its full sequence is Na(+)-translocating NADH-quinone reductase subunit A (444 aa).

The protein belongs to the NqrA family. Composed of six subunits; NqrA, NqrB, NqrC, NqrD, NqrE and NqrF.

It carries out the reaction a ubiquinone + n Na(+)(in) + NADH + H(+) = a ubiquinol + n Na(+)(out) + NAD(+). In terms of biological role, NQR complex catalyzes the reduction of ubiquinone-1 to ubiquinol by two successive reactions, coupled with the transport of Na(+) ions from the cytoplasm to the periplasm. NqrA to NqrE are probably involved in the second step, the conversion of ubisemiquinone to ubiquinol. The protein is Na(+)-translocating NADH-quinone reductase subunit A of Shewanella denitrificans (strain OS217 / ATCC BAA-1090 / DSM 15013).